The sequence spans 615 residues: MQKTYPLLSQINSPDDLRLLPKDKLQPLCDELRAYLLESVSQTSGHLASGLGVVELTVALHYVYQTPFDQLIWDVGHQAYPHKILTGRRDQMHTIRQKDGLHPFPWREESPFDVLSVGHSSTSISAGLGIAVAAEKENAGRKTVCVIGDGAITAGMAFEAINHAGSIHTDMLVILNDNEMSISENVGALNNHLARLFTGSLYGTLREGGKKLLSGIPSIKEFVRKTEEHVKGFVSPVGTMFETLGFNYIGPIDGHDIEELISTLKNMRNMSGPQFLHIKTKKGKGYTPAEQDPIGFHGVPKFDHTSGKLPQTKSVPTYSNIFGDWLCEMAERDPKIIGITPAMREGSGMVEFSKRFPQQYFDVAIAEQHAVTFGAGLAIAGYKPVVAIYSSFLQRAYDQLIHDVAIQNLPVIFAIDRAGIVGADGQTHQGAFDLSFMRCVPNMTIMCPSDENEMRQMLYTAYTMNSPVAVRYPRGNAQGVELQPMQALEIGKGKVLKQGEKVAILNFGALLNEAKQVAETHNYTLVDMRFAKPLDEALIAELADRHELLVTLEENALQGGAGSAVNEYLQHIGKIKPLLMLGIPDFFIPQATQAESYADLGLDAKGIEQKILSMK.

Residues H77 and G118–S120 each bind thiamine diphosphate. Position 149 (D149) interacts with Mg(2+). Thiamine diphosphate-binding positions include G150–A151, N178, Y286, and E367. Position 178 (N178) interacts with Mg(2+).

The protein belongs to the transketolase family. DXPS subfamily. In terms of assembly, homodimer. Mg(2+) serves as cofactor. Requires thiamine diphosphate as cofactor.

The enzyme catalyses D-glyceraldehyde 3-phosphate + pyruvate + H(+) = 1-deoxy-D-xylulose 5-phosphate + CO2. Its pathway is metabolic intermediate biosynthesis; 1-deoxy-D-xylulose 5-phosphate biosynthesis; 1-deoxy-D-xylulose 5-phosphate from D-glyceraldehyde 3-phosphate and pyruvate: step 1/1. In terms of biological role, catalyzes the acyloin condensation reaction between C atoms 2 and 3 of pyruvate and glyceraldehyde 3-phosphate to yield 1-deoxy-D-xylulose-5-phosphate (DXP). The chain is 1-deoxy-D-xylulose-5-phosphate synthase from Glaesserella parasuis serovar 5 (strain SH0165) (Haemophilus parasuis).